Reading from the N-terminus, the 512-residue chain is DEAD-box ATP-dependent RNA helicase 5 (512 aa).

Disordered regions lie at residues 1–33 (MGRS…KLEA) and 45–76 (ATST…GGGK). Residues 14 to 45 (SRKSKKEKKSKKDKKRKLEAEAEVVVVEAAAA) adopt a coiled-coil conformation. The segment covering 16–30 (KSKKEKKSKKDKKRK) has biased composition (basic residues). The Q motif signature appears at 94–120 (SSFAATALPPQVLDCCKGFERPSPIQA). The Helicase ATP-binding domain maps to 123–300 (WPYLLDGRDF…QEFMDPNPIK (178 aa)). 136–143 (AATGSGKT) contributes to the ATP binding site. A DEAD box motif is present at residues 248–251 (DEAD). Residues 333 to 476 (LLDKYHKAQR…VVPPALTKFG (144 aa)) form the Helicase C-terminal domain.

Belongs to the DEAD box helicase family. DDX5/DBP2 subfamily.

The protein localises to the nucleus. Its subcellular location is the nucleolus. The catalysed reaction is ATP + H2O = ADP + phosphate + H(+). Functionally, ATP-dependent RNA helicase required for 60S ribosomal subunit synthesis. Involved in efficient pre-rRNA processing, predominantly at site A3, which is necessary for the normal formation of 25S and 5.8S rRNAs. The chain is DEAD-box ATP-dependent RNA helicase 5 from Oryza sativa subsp. japonica (Rice).